The primary structure comprises 863 residues: Potassium/sodium hyperpolarization-activated cyclic nucleotide-gated channel 2 (863 aa).

A compositionally biased stretch (gly residues) spans 1 to 10; sequence MDARGGGGRP. The interval 1–131 is disordered; it reads MDARGGGGRP…AGPAGEPRGS (131 aa). Residues 1–188 are Cytoplasmic-facing; it reads MDARGGGGRP…PYSDFRFYWD (188 aa). Over residues 17–47 the composition is skewed to pro residues; the sequence is TPAPGPPPPPPPPAPPQPQPPPAPPPNPTTP. Low complexity predominate over residues 106–128; that stretch reads GAASGPAAAEEAGSEEAGPAGEP. 2 positions are modified to phosphoserine: Ser-119 and Ser-134. The tract at residues 131–182 is involved in subunit assembly; it reads SQASFLQRQFGALLQPGVNKFSLRMFGSQKAVEREQERVKSAGAWIIHPYSD. The helical transmembrane segment at 189-209 threads the bilayer; it reads FTMLLFMVGNLIIIPVGITFF. The Extracellular portion of the chain corresponds to 210 to 213; sequence KDET. Residues 214-234 form a helical membrane-spanning segment; it reads TAPWIVFNVVSDTFFLMDLVL. The Cytoplasmic portion of the chain corresponds to 235-261; the sequence is NFRTGIVIEDNTEIILDPEKIKKKYLR. Residues 262-282 form a helical membrane-spanning segment; that stretch reads TWFVVDFVSSIPVDYIFLIVE. Topologically, residues 283-290 are extracellular; that stretch reads KGIDSEVY. The helical; Voltage-sensor transmembrane segment at 291–311 threads the bilayer; sequence KTARALRIVRFTKILSLLRLL. The Cytoplasmic portion of the chain corresponds to 312–342; that stretch reads RLSRLIRYIHQWEEIFHMTYDLASAVMRICN. A helical membrane pass occupies residues 343–363; the sequence is LISMMLLLCHWDGCLQFLVPM. The Extracellular portion of the chain corresponds to 364–386; it reads LQDFPSDCWVSINNMVNHSWSEL. The N-linked (GlcNAc...) asparagine glycan is linked to Asn-380. The pore-forming intramembrane region spans 387 to 408; sequence YSFALFKAMSHMLCIGYGRQAP. Residues 409–413 are Extracellular-facing; sequence ESMTD. Residues 414–434 traverse the membrane as a helical segment; that stretch reads IWLTMLSMIVGATCYAMFIGH. Topologically, residues 435-863 are cytoplasmic; that stretch reads ATALIQSLDS…SARSRLSSNL (429 aa). 6 residues coordinate 3',5'-cyclic AMP: Gly-581, Glu-582, Cys-584, Arg-591, Thr-592, and Arg-632. Ser-641 is subject to Phosphoserine; by PKG/PRKG2. The residue at position 726 (Ser-726) is a Phosphoserine. At Arg-728 the chain carries Omega-N-methylarginine. Residues 730–863 are disordered; that stretch reads VRRAPPGPLP…SARSRLSSNL (134 aa). Pro residues predominate over residues 734-755; that stretch reads PPGPLPPAASPGPPAASPPAAP. Residues Ser-743, Ser-750, and Ser-757 each carry the phosphoserine modification. Low complexity-rich tracts occupy residues 756–765 and 778–834; these read SSPRAPRTSP and PALP…AAPS. Residues Ser-840, Ser-842, and Ser-847 each carry the phosphoserine modification.

The protein belongs to the potassium channel HCN family. In terms of assembly, homotetramer. The channel is composed of a homo- or heterotetrameric complex of pore-forming subunits. Heterotetramer with HCN1. Forms an obligate 4:4 complex with accessory subunit PEX5L. Interacts with KCNE2. Phosphorylation at Ser-641 by PRKG2 shifts the voltage-dependence to more negative voltages, hence counteracting the stimulatory effect of cGMP on gating. In terms of processing, N-glycosylated; required for cell surface trafficking of HCN2. Post-translationally, S-palmitoylated. As to expression, highly expressed in neonatal and adult ventricle and in brain. Highly expressed in the pyramidal layer in hippocampus, in anterior dorsal nucleus in thalamus, in the mammillary nucleus in hypothalamus, in red nucleus, in trigeminal mesencephalic, spinal and principal nuclei, in cochlear and trapezoid nuclei and in the dorsal tegemental nucleus.

Its subcellular location is the cell membrane. The enzyme catalyses Na(+)(in) = Na(+)(out). It catalyses the reaction K(+)(in) = K(+)(out). It carries out the reaction NH4(+)(in) = NH4(+)(out). Its activity is regulated as follows. Activated by cAMP, and at 10-100 times higher concentrations, also by cGMP. cAMP binding causes a conformation change that leads to the assembly of an active tetramer and channel opening. In the absence of cAMP, the C-terminal region is thought to exert a tonic inhibition on the pore when HCN2 is in a non-tetrameric form. Channel activity is modulated by intracellular chloride ions and pH; acidic pH shifts the activation to more negative voltages. Phosphatidylinositol-4,5- bisphosphate (PIP(2)) acts as a ligand that allosterically opens HCN2 by shifting voltage-dependent channel activation toward depolarized potentials. Inhibited by extracellular cesium ions. Functionally, hyperpolarization-activated ion channel exhibiting weak selectivity for potassium over sodium ions. Contributes to the native pacemaker currents in heart (If) and in neurons (Ih). Can also transport ammonium in the distal nephron. Involved in the initiation of neuropathic pain in sensory neurons. Produces a large instantaneous current. In Rattus norvegicus (Rat), this protein is Potassium/sodium hyperpolarization-activated cyclic nucleotide-gated channel 2 (Hcn2).